We begin with the raw amino-acid sequence, 338 residues long: Putative pectinesterase 63 (338 aa).

The first 24 residues, 1–24 (MGYNYVSLIVTILLVVITSPVVFG), serve as a signal peptide directing secretion. Substrate is bound by residues Thr-116 and Gln-151. The active-site Proton donor is Asp-174. Asp-195 acts as the Nucleophile in catalysis. A substrate-binding site is contributed by Arg-252.

This sequence belongs to the pectinesterase family.

The protein localises to the secreted. It localises to the cell wall. It carries out the reaction [(1-&gt;4)-alpha-D-galacturonosyl methyl ester](n) + n H2O = [(1-&gt;4)-alpha-D-galacturonosyl](n) + n methanol + n H(+). The protein operates within glycan metabolism; pectin degradation; 2-dehydro-3-deoxy-D-gluconate from pectin: step 1/5. Functionally, acts in the modification of cell walls via demethylesterification of cell wall pectin. This chain is Putative pectinesterase 63 (PME63), found in Arabidopsis thaliana (Mouse-ear cress).